Here is a 638-residue protein sequence, read N- to C-terminus: 1-deoxy-D-xylulose-5-phosphate synthase (638 aa).

Residues H75 and A116–S118 each bind thiamine diphosphate. Residue D147 coordinates Mg(2+). Thiamine diphosphate is bound by residues G148–A149, N177, Y288, and E370. N177 contacts Mg(2+).

It belongs to the transketolase family. DXPS subfamily. In terms of assembly, homodimer. The cofactor is Mg(2+). Requires thiamine diphosphate as cofactor.

The enzyme catalyses D-glyceraldehyde 3-phosphate + pyruvate + H(+) = 1-deoxy-D-xylulose 5-phosphate + CO2. The protein operates within metabolic intermediate biosynthesis; 1-deoxy-D-xylulose 5-phosphate biosynthesis; 1-deoxy-D-xylulose 5-phosphate from D-glyceraldehyde 3-phosphate and pyruvate: step 1/1. Functionally, catalyzes the acyloin condensation reaction between C atoms 2 and 3 of pyruvate and glyceraldehyde 3-phosphate to yield 1-deoxy-D-xylulose-5-phosphate (DXP). The chain is 1-deoxy-D-xylulose-5-phosphate synthase from Cupriavidus necator (strain ATCC 17699 / DSM 428 / KCTC 22496 / NCIMB 10442 / H16 / Stanier 337) (Ralstonia eutropha).